The sequence spans 215 residues: Probable GTP-binding protein EngB (215 aa).

Residues 30–204 form the EngB-type G domain; that stretch reads EGLEVAFAGR…QMVLAQWLGL (175 aa). GTP is bound by residues 38-45, 64-68, 82-85, 149-152, and 182-185; these read GRSNAGKS, GRTQL, DLPG, TKAD, and LFSA. Ser-45 and Thr-66 together coordinate Mg(2+).

It belongs to the TRAFAC class TrmE-Era-EngA-EngB-Septin-like GTPase superfamily. EngB GTPase family. Requires Mg(2+) as cofactor.

In terms of biological role, necessary for normal cell division and for the maintenance of normal septation. The sequence is that of Probable GTP-binding protein EngB from Pseudomonas paraeruginosa (strain DSM 24068 / PA7) (Pseudomonas aeruginosa (strain PA7)).